Here is a 584-residue protein sequence, read N- to C-terminus: Membrane frizzled-related protein (584 aa).

Topologically, residues 1 to 69 (MKDYDDVILR…QPDCHFSWFC (69 aa)) are cytoplasmic. The chain crosses the membrane as a helical; Signal-anchor for type II membrane protein span at residues 70-90 (ILLLSGLLLLLLGLLVAVILA). Residues 91-584 (QLQATSLPRT…AASLEACSQP (494 aa)) are Extracellular-facing. The interval 108–140 (RGLTPMGVIPSTTPNTTTTTTTTTPARTGQQEA) is disordered. Positions 119 to 132 (TTPNTTTTTTTTTP) are enriched in low complexity. 2 disulfide bridges follow: cysteine 150–cysteine 176 and cysteine 203–cysteine 222. One can recognise a CUB 1 domain in the interval 150–259 (CGGLLPGPSG…SGFQAWYQAV (110 aa)). Asparagine 233 is a glycosylation site (N-linked (GlcNAc...) asparagine). An LDL-receptor class A 1 domain is found at 265–301 (SCAHNEFHCDLLLCLKRDSVCDGITECADGSDEANCS). 5 disulfides stabilise this stretch: cysteine 266–cysteine 278, cysteine 273–cysteine 291, cysteine 285–cysteine 300, cysteine 307–cysteine 333, and cysteine 360–cysteine 383. Residues 307-420 (CGGNLTGLYG…GGFLATYQAI (114 aa)) form the CUB 2 domain. N-linked (GlcNAc...) asparagine glycosylation is present at asparagine 421. In terms of domain architecture, LDL-receptor class A 2 spans 426–460 (GCPWAEFCQSGGYRDLQWMCDLWKDCANDSNDNCS). Disulfide bonds link cysteine 433-cysteine 451, cysteine 445-cysteine 459, cysteine 471-cysteine 533, cysteine 479-cysteine 526, cysteine 517-cysteine 554, cysteine 543-cysteine 581, and cysteine 547-cysteine 569. Asparagine 458 is a glycosylation site (N-linked (GlcNAc...) asparagine). In terms of domain architecture, FZ spans 466-584 (QPDLTCEPVQ…AASLEACSQP (119 aa)).

As to quaternary structure, interacts with C1QTNF5. As to expression, expressed in retinal pigment epithelium and ciliary epithelium of the eye.

Its subcellular location is the apical cell membrane. Its function is as follows. May play a role in eye development. This Mus musculus (Mouse) protein is Membrane frizzled-related protein (Mfrp).